A 428-amino-acid polypeptide reads, in one-letter code: Enolase (428 aa).

Residue Gln-163 participates in (2R)-2-phosphoglycerate binding. Glu-205 serves as the catalytic Proton donor. Mg(2+) contacts are provided by Asp-242, Glu-283, and Asp-310. (2R)-2-phosphoglycerate-binding residues include Lys-335, Arg-364, Ser-365, and Lys-386. The active-site Proton acceptor is the Lys-335.

It belongs to the enolase family. The cofactor is Mg(2+).

The protein localises to the cytoplasm. It localises to the secreted. It is found in the cell surface. It carries out the reaction (2R)-2-phosphoglycerate = phosphoenolpyruvate + H2O. It functions in the pathway carbohydrate degradation; glycolysis; pyruvate from D-glyceraldehyde 3-phosphate: step 4/5. Its function is as follows. Catalyzes the reversible conversion of 2-phosphoglycerate (2-PG) into phosphoenolpyruvate (PEP). It is essential for the degradation of carbohydrates via glycolysis. The sequence is that of Enolase from Saccharopolyspora erythraea (strain ATCC 11635 / DSM 40517 / JCM 4748 / NBRC 13426 / NCIMB 8594 / NRRL 2338).